The following is a 302-amino-acid chain: DDRGK domain-containing protein 1 (302 aa).

The Lumenal portion of the chain corresponds to 1–5; it reads MDGGG. Residues 6–26 traverse the membrane as a helical segment; that stretch reads GMLGAVVCLLLVFAIFPLLLW. Residues 27-302 lie on the Cytoplasmic side of the membrane; sequence RRRSDAAHRL…DENAAAGTEL (276 aa). Disordered regions lie at residues 36 to 151 and 279 to 302; these read LPPQ…EEAR and DLEP…GTEL. The span at 79–91 shows a compositional bias: acidic residues; sequence VDDADSDLEEEIQ. Residues 103–151 are compositionally biased toward basic and acidic residues; sequence KRQDREAQRQAEEAARDSRRTKQDRYAEMRRKKDEEREAQERLMEEEAR.

Belongs to the DDRGK1 family.

It is found in the endoplasmic reticulum membrane. Substrate adapter for ufmylation, the covalent attachment of the ubiquitin-like modifier UFM1 to substrate proteins. The chain is DDRGK domain-containing protein 1 from Oryza sativa subsp. japonica (Rice).